The following is a 466-amino-acid chain: Serine/threonine-protein kinase SSN3 (466 aa).

In terms of domain architecture, Protein kinase spans 32–396 (YKILGFISSG…ARDALRHPWF (365 aa)). 38–46 (ISSGTYGRV) serves as a coordination point for ATP. Residues 58-105 (ASAKSALPSSTRAALSLPKDKLPSPSFTEDSDPLNNPEMCMRPGDRPA) are disordered. K114 serves as a coordination point for ATP. D216 acts as the Proton acceptor in catalysis. Residues 421-466 (THEDNGDAKMGSLPQSMAGGRLPSSSNFRPASGNIVQPAARKKARI) are disordered.

This sequence belongs to the protein kinase superfamily. CMGC Ser/Thr protein kinase family. CDC2/CDKX subfamily. Component of the SRB8-11 complex, a regulatory module of the Mediator complex. The cofactor is Mg(2+).

The protein resides in the nucleus. It carries out the reaction L-seryl-[protein] + ATP = O-phospho-L-seryl-[protein] + ADP + H(+). It catalyses the reaction L-threonyl-[protein] + ATP = O-phospho-L-threonyl-[protein] + ADP + H(+). The catalysed reaction is [DNA-directed RNA polymerase] + ATP = phospho-[DNA-directed RNA polymerase] + ADP + H(+). In terms of biological role, component of the SRB8-11 complex. The SRB8-11 complex is a regulatory module of the Mediator complex which is itself involved in regulation of basal and activated RNA polymerase II-dependent transcription. The SRB8-11 complex may be involved in the transcriptional repression of a subset of genes regulated by Mediator. It may inhibit the association of the Mediator complex with RNA polymerase II to form the holoenzyme complex. The SRB8-11 complex phosphorylates the C-terminal domain (CTD) of the largest subunit of RNA polymerase II. This Cryptococcus neoformans var. neoformans serotype D (strain B-3501A) (Filobasidiella neoformans) protein is Serine/threonine-protein kinase SSN3 (SSN3).